Consider the following 554-residue polypeptide: MSEAEARPTNFIRQIIDEDLASGKHTTVHTRFPPEPNGYLHIGHAKSICLNFGIAQDYKGQCNLRFDDTNPVKEDIEYVESIKNDVEWLGFHWSGNVRYSSDYFDQLHAYAIELINKGLAYVDELTPEQIREYRGTLTQPGKNSPYRDRSVEENLALFEKMRAGGFEEGKACLRAKIDMASPFIVMRDPVLYRIKFAEHHQTGNKWCIYPMYDFTHCISDALEGITHSLCTLEFQDNRRLYDWVLDNITISVHPRQYEFSRLNLEYTVMSKRKLNLLVTDKHVEGWDDPRMPTISGLRRRGYTAASIREFCKRIGVTKQDNTIEMASLESCIREDLNENAPRAMAVIDPVKLVIENYQGEGEMVTMPNHPNKPEMGSRQVPFSGEIWIDRADFREEANKQYKRLVLGKEVRLRNAYVIKAERVEKDAEGNITTIFCTYDADTLSKDPADGRKVKGVIHWVSAAHALPVEIRLYDRLFSVPNPGAADDFLSVINPESLVIKQGFAEPSLKDAVAGKAFQFEREGYFCLDSRHSTAEKPVFNRTVGLRDTWAKVGE.

The short motif at 34-44 (PEPNGYLHIGH) is the 'HIGH' region element. ATP is bound by residues 35 to 37 (EPN) and 41 to 47 (HIGHAKS). Residues aspartate 67 and tyrosine 212 each coordinate L-glutamine. Residues threonine 231, 261 to 262 (RL), and 269 to 271 (MSK) each bind ATP. Residues 268–272 (VMSKR) carry the 'KMSKS' region motif. The interaction with tRNA stretch occupies residues 317-324 (TKQDNTIE).

This sequence belongs to the class-I aminoacyl-tRNA synthetase family. In terms of assembly, monomer.

Its subcellular location is the cytoplasm. It carries out the reaction tRNA(Gln) + L-glutamine + ATP = L-glutaminyl-tRNA(Gln) + AMP + diphosphate. This is Glutamine--tRNA ligase from Shigella boydii serotype 18 (strain CDC 3083-94 / BS512).